A 620-amino-acid chain; its full sequence is Chaperone protein HscA homolog (620 aa).

Belongs to the heat shock protein 70 family.

Its function is as follows. Chaperone involved in the maturation of iron-sulfur cluster-containing proteins. Has a low intrinsic ATPase activity which is markedly stimulated by HscB. In Shewanella sp. (strain MR-4), this protein is Chaperone protein HscA homolog.